Consider the following 870-residue polypeptide: DNA mismatch repair protein MutS (870 aa).

608–615 is an ATP binding site; sequence GPNMAGKS.

Belongs to the DNA mismatch repair MutS family.

Its function is as follows. This protein is involved in the repair of mismatches in DNA. It is possible that it carries out the mismatch recognition step. This protein has a weak ATPase activity. This is DNA mismatch repair protein MutS from Persephonella marina (strain DSM 14350 / EX-H1).